Here is a 1946-residue protein sequence, read N- to C-terminus: 1,3-beta-glucan synthase component (1946 aa).

Disordered regions lie at residues Met1–Phe127 and Tyr152–Tyr198. Composition is skewed to low complexity over residues Gly24–Gln34, Gly43–Gly60, and Asp91–Tyr109. The span at Gln165–Asn180 shows a compositional bias: polar residues. N-linked (GlcNAc...) asparagine glycans are attached at residues Asn171 and Asn290. The tract at residues Lys297 to Thr316 is disordered. 6 consecutive transmembrane segments (helical) span residues Trp489 to Phe509, Phe537 to Ala557, Leu576 to Phe596, Ile618 to Leu638, Phe675 to Leu695, and Ile734 to Phe754. N-linked (GlcNAc...) asparagine glycosylation is found at Asn1017 and Asn1312. Helical transmembrane passes span Asn1356–Leu1376, Cys1413–Leu1433, Phe1500–Ser1520, Trp1523–Leu1543, and Ile1615–Leu1635. N-linked (GlcNAc...) asparagine glycosylation is present at Asn1649. A run of 5 helical transmembrane segments spans residues Leu1667–Gly1687, Phe1703–Phe1723, Leu1738–Leu1758, Phe1803–Ile1823, and Ala1864–Ile1884. Asn1918 carries N-linked (GlcNAc...) asparagine glycosylation. The disordered stretch occupies residues Thr1920–Phe1946. The segment covering Glu1925–Ala1940 has biased composition (low complexity).

It belongs to the glycosyltransferase 48 family. In terms of assembly, component of the 1,3-beta-glucan synthase (GS) complex composed of a catalytic subunit GLS1 and a regulatory subunit RHO1.

It localises to the membrane. Its subcellular location is the cell membrane. It catalyses the reaction [(1-&gt;3)-beta-D-glucosyl](n) + UDP-alpha-D-glucose = [(1-&gt;3)-beta-D-glucosyl](n+1) + UDP + H(+). With respect to regulation, activated by iron ions. Inhibited by manganese, copper and zinc ions. Catalytic subunit of the 1,3-beta-glucan synthase (GS). Synthesizes 1,3-beta-glucan, a major structural component of the fungal cell wall. Involved in cell wall synthesis, maintenance and remodeling. The protein is 1,3-beta-glucan synthase component of Cordyceps militaris (strain CM01) (Caterpillar fungus).